The chain runs to 466 residues: 3-isopropylmalate dehydratase large subunit (466 aa).

Positions 347, 407, and 410 each coordinate [4Fe-4S] cluster.

The protein belongs to the aconitase/IPM isomerase family. LeuC type 1 subfamily. As to quaternary structure, heterodimer of LeuC and LeuD. The cofactor is [4Fe-4S] cluster.

The enzyme catalyses (2R,3S)-3-isopropylmalate = (2S)-2-isopropylmalate. It functions in the pathway amino-acid biosynthesis; L-leucine biosynthesis; L-leucine from 3-methyl-2-oxobutanoate: step 2/4. In terms of biological role, catalyzes the isomerization between 2-isopropylmalate and 3-isopropylmalate, via the formation of 2-isopropylmaleate. In Shewanella pealeana (strain ATCC 700345 / ANG-SQ1), this protein is 3-isopropylmalate dehydratase large subunit.